A 450-amino-acid polypeptide reads, in one-letter code: Serine/threonine-protein kinase SSN3 (450 aa).

In terms of domain architecture, Protein kinase spans Y40–F393. ATP is bound by residues I46–V54 and K71. The active-site Proton acceptor is the D173. 2 disordered regions span residues A307–K341 and Q418–E450. Residues H310–Y326 are compositionally biased toward basic residues.

Belongs to the protein kinase superfamily. CMGC Ser/Thr protein kinase family. CDC2/CDKX subfamily. In terms of assembly, component of the SRB8-11 complex, a regulatory module of the Mediator complex. Interacts with SSN8/FCC1. Mg(2+) is required as a cofactor.

It is found in the nucleus. It carries out the reaction L-seryl-[protein] + ATP = O-phospho-L-seryl-[protein] + ADP + H(+). The catalysed reaction is L-threonyl-[protein] + ATP = O-phospho-L-threonyl-[protein] + ADP + H(+). It catalyses the reaction [DNA-directed RNA polymerase] + ATP = phospho-[DNA-directed RNA polymerase] + ADP + H(+). Its function is as follows. Component of the SRB8-11 complex. The SRB8-11 complex is a regulatory module of the Mediator complex which is itself involved in regulation of basal and activated RNA polymerase II-dependent transcription. The SRB8-11 complex may be involved in the transcriptional repression of a subset of genes regulated by Mediator. It may inhibit the association of the Mediator complex with RNA polymerase II to form the holoenzyme complex. The SRB8-11 complex phosphorylates the C-terminal domain (CTD) of the largest subunit of RNA polymerase II. Required for normal growth and secondary metabolism. This chain is Serine/threonine-protein kinase SSN3 (SSN3), found in Gibberella moniliformis (Maize ear and stalk rot fungus).